Consider the following 891-residue polypeptide: uncharacterized protein (891 aa).

The first 20 residues, 1 to 20, serve as a signal peptide directing secretion; sequence MKILKSLVLLVLFMAMPAKA. Transmembrane regions (helical) follow at residues 525-545, 568-588, 614-634, 652-672, 685-705, and 776-796; these read VTIFGLMFVTGALKLTAVEVI, TYFFSAFTDGIDFFVTNVVGA, LLFIELLQIHNGLAFIAIITI, VIAFIGVTVMISLAPFFIILM, ISTLLSYVVQPTILLIFFLLI, and FLVLFTTALLFYSYCLMSYSL.

The protein belongs to the TrbL/VirB6 family.

Its subcellular location is the cell membrane. This is an uncharacterized protein from Rickettsia conorii (strain ATCC VR-613 / Malish 7).